The chain runs to 181 residues: HGPRTase-like protein 2 (181 aa).

Belongs to the purine/pyrimidine phosphoribosyltransferase family. Archaeal HPRT subfamily.

In terms of biological role, may catalyze a purine salvage reaction, the substrate is unknown. This Haloferax volcanii (strain ATCC 29605 / DSM 3757 / JCM 8879 / NBRC 14742 / NCIMB 2012 / VKM B-1768 / DS2) (Halobacterium volcanii) protein is HGPRTase-like protein 2.